The chain runs to 304 residues: Protein BOBBER 1 (304 aa).

A2 carries the N-acetylalanine modification. Residues 54 to 106 are a coiled coil; that stretch reads EDEIVVAVRAAKEKLKKAEKKKAEKESVKPVEKKAEKEIVKLVEKKVEKESVK. A disordered region spans residues 111–141; that stretch reads ASSAEPIEVEKPKEEEEKKESGPIVPNKGNG. Residues 118–131 show a composition bias toward basic and acidic residues; the sequence is EVEKPKEEEEKKES. Positions 142–231 constitute a CS domain; sequence TDLENYSWIQ…DQMEWWKCCV (90 aa).

Expressed in all seedling tissues with highest expression levels at the root tip.

It is found in the cytoplasm. Its subcellular location is the cytoplasmic granule. Functionally, small heat shock protein required for the establishment of auxin gradients and for patterning of the apical domain of the embryo. Involved in the specification of the cotyledon primordia. Also required for normal inflorescence and floral meristem function, normal developmental patterning and thermotolerance. Acts as a molecular chaperone. This Arabidopsis thaliana (Mouse-ear cress) protein is Protein BOBBER 1 (BOB1).